The following is a 669-amino-acid chain: Elongation factor G 2 (669 aa).

One can recognise a tr-type G domain in the interval 1-276; sequence MSIRNIGIMA…SIVDYLPSPF (276 aa). GTP contacts are provided by residues 10-17, 74-78, and 128-131; these read AHIDAGKT, DTPGH, and NKMD.

It belongs to the TRAFAC class translation factor GTPase superfamily. Classic translation factor GTPase family. EF-G/EF-2 subfamily.

Its subcellular location is the cytoplasm. Its function is as follows. Catalyzes the GTP-dependent ribosomal translocation step during translation elongation. During this step, the ribosome changes from the pre-translocational (PRE) to the post-translocational (POST) state as the newly formed A-site-bound peptidyl-tRNA and P-site-bound deacylated tRNA move to the P and E sites, respectively. Catalyzes the coordinated movement of the two tRNA molecules, the mRNA and conformational changes in the ribosome. The sequence is that of Elongation factor G 2 (fusB) from Borreliella burgdorferi (strain ATCC 35210 / DSM 4680 / CIP 102532 / B31) (Borrelia burgdorferi).